A 291-amino-acid chain; its full sequence is Co-chaperone protein DjlA (291 aa).

Topologically, residues 1–6 (MRYWGK) are periplasmic. Residues 7–31 (LLGLALGIVSSTGIWGMIMGLLMGH) form a helical membrane-spanning segment. The Cytoplasmic portion of the chain corresponds to 32 to 291 (WIDRARASRR…ELLKSANQTK (260 aa)). The segment at 177–223 (ESPTGQQSRQNQSRQNGKSQQRRNNGYSNGHSYGGQRPPSPLRGPTV) is disordered. Positions 181–211 (GQQSRQNQSRQNGKSQQRRNNGYSNGHSYGG) are enriched in low complexity. A J domain is found at 225-291 (SACRTLGVRS…ELLKSANQTK (67 aa)).

Homodimer.

The protein resides in the cell inner membrane. Its function is as follows. Regulatory DnaK co-chaperone. Direct interaction between DnaK and DjlA is needed for the induction of the wcaABCDE operon, involved in the synthesis of a colanic acid polysaccharide capsule, possibly through activation of the RcsB/RcsC phosphotransfer signaling pathway. The colanic acid capsule may help the bacterium survive conditions outside the host. This chain is Co-chaperone protein DjlA, found in Pectobacterium atrosepticum (strain SCRI 1043 / ATCC BAA-672) (Erwinia carotovora subsp. atroseptica).